A 255-amino-acid chain; its full sequence is MNILVTNDDGVTADGILCLARTLSKKYKVTVVAPETEQSAVGHAITLRLPLWLRKLDINENFEIYSVSGTPADCVKMGIDVVLGEKPDLLISGINRGNNLGTDVVYSGTVSGALEGAIAGVPSIAVSSYSFENPMYETAAKFILDFLEEFDVRSIPRFTALNINVPSVPYDQIKGWKLTRQSKRMYDDYFEKRVDPSGGNYYWMMGTIIEDDPDPKADYKAIAENYVSVTPISVFLTNEEYLKRLEERYEDKTIR.

Residues Asp8, Asp9, Ser39, and Asn95 each coordinate a divalent metal cation.

The protein belongs to the SurE nucleotidase family. It depends on a divalent metal cation as a cofactor.

It localises to the cytoplasm. The catalysed reaction is a ribonucleoside 5'-phosphate + H2O = a ribonucleoside + phosphate. Nucleotidase that shows phosphatase activity on nucleoside 5'-monophosphates. This is 5'-nucleotidase SurE from Thermosipho africanus (strain TCF52B).